We begin with the raw amino-acid sequence, 326 residues long: Probable iron chelatin transport system permease protein HP_0889 (326 aa).

The next 10 helical transmembrane spans lie at 7–27, 64–84, 91–111, 113–133, 142–162, 164–184, 187–207, 241–261, 275–295, and 301–321; these read IALA…ESLS, ILAL…QTIF, PFLL…IAVV, SNIA…VLAM, LSLV…AGAI, FFVI…SLSL, YKDC…LFLL, VASA…LVIP, LLLS…VVAK, and DLPV…WLLF.

This sequence belongs to the binding-protein-dependent transport system permease family. FecCD subfamily.

It localises to the cell inner membrane. Its function is as follows. Part of a binding-protein-dependent transport system for an iron chelatin; probably responsible for the translocation of the substrate across the membrane. This chain is Probable iron chelatin transport system permease protein HP_0889, found in Helicobacter pylori (strain ATCC 700392 / 26695) (Campylobacter pylori).